Consider the following 309-residue polypeptide: MTRVKSKLDEELSSPWFYTVCTMGGMLSAGTTHLAITPLDVLKVNMQVNPVKYNSIPSGFSTLLREHGHSYLWRGWSGKLLGYGVQGGCRFGLYEYFKTLYSDVLPNHNRTSIYFLSSASAQIFADMALCPFEAIKVRVQTQPMFAKGLLDGFPRVYRSEGLAGFHRGLFPLWCRNLPFSMVMFSTFEQSVEFIYQKIIQKRKQDCSKAQQLGVTCLAGYTAGAVGTIISNPADVVLSSLYNNKAKNVLQAVRNIGFVGLFTRSLPVRITIVGPVITLQWFFYDAIKVLSGFPTSGGVKKPVDAAKLSV.

At 1–15 the chain is on the mitochondrial intermembrane side; the sequence is MTRVKSKLDEELSSP. A helical transmembrane segment spans residues 16–36; sequence WFYTVCTMGGMLSAGTTHLAI. Solcar repeat units follow at residues 16–100, 109–193, and 210–289; these read WFYT…FKTL, NRTS…SVEF, and QQLG…IKVL. The Mitochondrial matrix portion of the chain corresponds to 37-74; the sequence is TPLDVLKVNMQVNPVKYNSIPSGFSTLLREHGHSYLWR. The chain crosses the membrane as a helical span at residues 75–94; sequence GWSGKLLGYGVQGGCRFGLY. Over 95–111 the chain is Mitochondrial intermembrane; it reads EYFKTLYSDVLPNHNRT. Residues 112 to 132 traverse the membrane as a helical segment; sequence SIYFLSSASAQIFADMALCPF. Residues 133–167 are Mitochondrial matrix-facing; the sequence is EAIKVRVQTQPMFAKGLLDGFPRVYRSEGLAGFHR. Residues 168 to 187 form a helical membrane-spanning segment; the sequence is GLFPLWCRNLPFSMVMFSTF. Residues 188–208 lie on the Mitochondrial intermembrane side of the membrane; that stretch reads EQSVEFIYQKIIQKRKQDCSK. A helical membrane pass occupies residues 209 to 229; the sequence is AQQLGVTCLAGYTAGAVGTII. Topologically, residues 230-268 are mitochondrial matrix; the sequence is SNPADVVLSSLYNNKAKNVLQAVRNIGFVGLFTRSLPVR. The chain crosses the membrane as a helical span at residues 269 to 289; the sequence is ITIVGPVITLQWFFYDAIKVL. The Mitochondrial intermembrane segment spans residues 290–309; the sequence is SGFPTSGGVKKPVDAAKLSV.

This sequence belongs to the mitochondrial carrier (TC 2.A.29) family. Expressed in stems, leaves and flowers. Strong expression in the stamens of flowers.

Its subcellular location is the mitochondrion inner membrane. Its function is as follows. Transport of phosphate groups from the cytosol to the mitochondrial matrix. Mediates salt stress tolerance through an ATP-dependent pathway and via modulation of the gibberellin metabolism. In Arabidopsis thaliana (Mouse-ear cress), this protein is Mitochondrial phosphate carrier protein 1, mitochondrial (MPT1).